Consider the following 146-residue polypeptide: MGEVKHLQINYKTDELFADFREFGNKNLYMIEELKGQMIDASSDSPFYGIFVGNKLVARMALLDKGEVEETYFPNSNYYILLWKLEVLDTYQRRGYAKQLLNFAKENKKPIKAIARNNSKAFFLTQGFKDVATKNPEGHDILIWNP.

The 140-residue stretch at 7 to 146 (LQINYKTDEL…EGHDILIWNP (140 aa)) folds into the N-acetyltransferase domain.

This is an uncharacterized protein from Staphylococcus epidermidis (strain ATCC 35984 / DSM 28319 / BCRC 17069 / CCUG 31568 / BM 3577 / RP62A).